We begin with the raw amino-acid sequence, 290 residues long: Nitrogenase iron protein 2 (290 aa).

10–17 (GKGGIGKS) contacts ATP. Residue C98 participates in [4Fe-4S] cluster binding. Position 101 is an ADP-ribosylarginine; by dinitrogenase reductase ADP-ribosyltransferase (R101). C133 lines the [4Fe-4S] cluster pocket.

This sequence belongs to the NifH/BchL/ChlL family. Homodimer. Requires [4Fe-4S] cluster as cofactor. The reversible ADP-ribosylation of Arg-101 inactivates the nitrogenase reductase and regulates nitrogenase activity.

It catalyses the reaction N2 + 8 reduced [2Fe-2S]-[ferredoxin] + 16 ATP + 16 H2O = H2 + 8 oxidized [2Fe-2S]-[ferredoxin] + 2 NH4(+) + 16 ADP + 16 phosphate + 6 H(+). Functionally, the key enzymatic reactions in nitrogen fixation are catalyzed by the nitrogenase complex, which has 2 components: the iron protein (component 2) and a component 1 which is either a molybdenum-iron protein, a vanadium-iron, or an iron-iron protein. The sequence is that of Nitrogenase iron protein 2 (vnfH) from Azotobacter chroococcum mcd 1.